The following is a 267-amino-acid chain: Membrane-associated protein Vipp1 (267 aa).

Positions 26–156 (EKVLEQAVID…KANAELQQTL (131 aa)) form a coiled coil. Residues 224–252 (GTSAATPQLEAAPVDSSVPANNASQDDAV) are disordered.

This sequence belongs to the PspA/Vipp/IM30 family.

It localises to the cell inner membrane. Required for thylakoid formation. The protein is Membrane-associated protein Vipp1 of Synechocystis sp. (strain ATCC 27184 / PCC 6803 / Kazusa).